Here is a 438-residue protein sequence, read N- to C-terminus: Serine hydroxymethyltransferase 1 (438 aa).

(6S)-5,6,7,8-tetrahydrofolate is bound by residues leucine 130 and 134–136 (GHL). The residue at position 239 (lysine 239) is an N6-(pyridoxal phosphate)lysine.

The protein belongs to the SHMT family. As to quaternary structure, homodimer. The cofactor is pyridoxal 5'-phosphate.

It is found in the cytoplasm. It catalyses the reaction (6R)-5,10-methylene-5,6,7,8-tetrahydrofolate + glycine + H2O = (6S)-5,6,7,8-tetrahydrofolate + L-serine. The protein operates within one-carbon metabolism; tetrahydrofolate interconversion. It functions in the pathway amino-acid biosynthesis; glycine biosynthesis; glycine from L-serine: step 1/1. Functionally, catalyzes the reversible interconversion of serine and glycine with tetrahydrofolate (THF) serving as the one-carbon carrier. This reaction serves as the major source of one-carbon groups required for the biosynthesis of purines, thymidylate, methionine, and other important biomolecules. Also exhibits THF-independent aldolase activity toward beta-hydroxyamino acids, producing glycine and aldehydes, via a retro-aldol mechanism. Thus, is able to catalyze the cleavage of L-allo-threonine. This Mycobacterium tuberculosis (strain ATCC 25618 / H37Rv) protein is Serine hydroxymethyltransferase 1.